Here is a 325-residue protein sequence, read N- to C-terminus: ATP phosphoribosyltransferase (325 aa).

Belongs to the ATP phosphoribosyltransferase family. Long subfamily. Mg(2+) is required as a cofactor.

Its subcellular location is the cytoplasm. It carries out the reaction 1-(5-phospho-beta-D-ribosyl)-ATP + diphosphate = 5-phospho-alpha-D-ribose 1-diphosphate + ATP. It functions in the pathway amino-acid biosynthesis; L-histidine biosynthesis; L-histidine from 5-phospho-alpha-D-ribose 1-diphosphate: step 1/9. With respect to regulation, feedback inhibited by histidine. In terms of biological role, catalyzes the condensation of ATP and 5-phosphoribose 1-diphosphate to form N'-(5'-phosphoribosyl)-ATP (PR-ATP). Has a crucial role in the pathway because the rate of histidine biosynthesis seems to be controlled primarily by regulation of HisG enzymatic activity. This is ATP phosphoribosyltransferase from Nitrobacter winogradskyi (strain ATCC 25391 / DSM 10237 / CIP 104748 / NCIMB 11846 / Nb-255).